A 109-amino-acid chain; its full sequence is uncharacterized protein (109 aa).

Residues 12 to 32 (PNILIKGVYIFVLYGMCICIV) traverse the membrane as a helical segment.

The protein localises to the membrane. This is an uncharacterized protein from Saccharomyces cerevisiae (strain ATCC 204508 / S288c) (Baker's yeast).